We begin with the raw amino-acid sequence, 292 residues long: UDP-N-acetylenolpyruvoylglucosamine reductase (292 aa).

Residues Gln21–Asp186 enclose the FAD-binding PCMH-type domain. Arg165 is a catalytic residue. The active-site Proton donor is the Ser215. Glu285 is a catalytic residue.

This sequence belongs to the MurB family. Requires FAD as cofactor.

Its subcellular location is the cytoplasm. It catalyses the reaction UDP-N-acetyl-alpha-D-muramate + NADP(+) = UDP-N-acetyl-3-O-(1-carboxyvinyl)-alpha-D-glucosamine + NADPH + H(+). Its pathway is cell wall biogenesis; peptidoglycan biosynthesis. Its function is as follows. Cell wall formation. This chain is UDP-N-acetylenolpyruvoylglucosamine reductase, found in Leuconostoc mesenteroides subsp. mesenteroides (strain ATCC 8293 / DSM 20343 / BCRC 11652 / CCM 1803 / JCM 6124 / NCDO 523 / NBRC 100496 / NCIMB 8023 / NCTC 12954 / NRRL B-1118 / 37Y).